Consider the following 120-residue polypeptide: Large ribosomal subunit protein uL18 (120 aa).

This sequence belongs to the universal ribosomal protein uL18 family. In terms of assembly, part of the 50S ribosomal subunit. Part of the 5S rRNA/L5/L18/L25 subcomplex. Contacts the 23S rRNA and 5S rRNA. Required for catalysis of RNase M5.

This is one of the proteins that bind and probably mediate the attachment of the 5S RNA into the large ribosomal subunit, where it forms part of the central protuberance. In terms of biological role, required for correct processing of both the 5' and 3' ends of 5S rRNA precursor, which is does in conjunction with ribonuclease M5 (RNase M5, rnmV). Possibly folds the 5S rRNA precursor into the correct conformation, thus acting as a chaperone. In Bacillus subtilis (strain 168), this protein is Large ribosomal subunit protein uL18.